The sequence spans 419 residues: Gamma-glutamyl phosphate reductase (419 aa).

This sequence belongs to the gamma-glutamyl phosphate reductase family.

Its subcellular location is the cytoplasm. It carries out the reaction L-glutamate 5-semialdehyde + phosphate + NADP(+) = L-glutamyl 5-phosphate + NADPH + H(+). Its pathway is amino-acid biosynthesis; L-proline biosynthesis; L-glutamate 5-semialdehyde from L-glutamate: step 2/2. Catalyzes the NADPH-dependent reduction of L-glutamate 5-phosphate into L-glutamate 5-semialdehyde and phosphate. The product spontaneously undergoes cyclization to form 1-pyrroline-5-carboxylate. The sequence is that of Gamma-glutamyl phosphate reductase from Azobacteroides pseudotrichonymphae genomovar. CFP2.